A 147-amino-acid polypeptide reads, in one-letter code: MLGLGHDVVDVGAFAEQLEMPGTRMTRLFSARECRQASLRASIKHDGEALHLAAKWAAKESVVKAWCEALVGRGITERPYTVDDTPWSRIEIVDDATGCPRVVMAAEVHVELCRSLAVTESAEPVWHVSISHDGGIASAVAVLDMRE.

Residues Asp7 and Glu60 each coordinate Mg(2+).

Belongs to the P-Pant transferase superfamily. AcpS family. Mg(2+) is required as a cofactor.

The protein localises to the cytoplasm. The enzyme catalyses apo-[ACP] + CoA = holo-[ACP] + adenosine 3',5'-bisphosphate + H(+). Transfers the 4'-phosphopantetheine moiety from coenzyme A to a Ser of acyl-carrier-protein. The sequence is that of Holo-[acyl-carrier-protein] synthase from Bifidobacterium animalis subsp. lactis (strain AD011).